A 1233-amino-acid polypeptide reads, in one-letter code: MASPPDTDGFSDVRKVGYLRKPKSMHKRFFVLRAASEAGGPARLEYYENEKKWRHKSSAPKRSIPLESCFNINKRADSKNKHLVALYTRDEHFAIAADSEAEQDSWYQALLQLHNRAKAHHDGAGGGCGGSCSGSSGVGEAGEDLSYDTGPGPAFKEVWQVILKPKGLGQTKNLIGIYRLCLTSKTISFVKLNSEAAAVVLQLMNIRRCGHSENFFFIEVGRSAVTGPGEFWMQVDDSVVAQNMHETILEAMRAMSDEFRPRSKSQSSSSCSNPISVPLRRHHLNNPPPSQVGLTRRSRTESITATSPASMVGGKPGSFRVRASSDGEGTMSRPASVDGSPVSPSTNRTHAHRHRGSSRLHPPLNHSRSIPMPSSRCSPSATSPVSLSSSSTSGHGSTSDCLFPRRSSASVSGSPSDGGFISSDEYGSSPCDFRSSFRSVTPDSLGHTPPARGEEELSNYICMGGKGASTLAAPNGHYILSRGGNGHRYIPGANLGTSPALPGDEAAGAADLDNRFRKRTHSAGTSPTISHQKTPSQSSVASIEEYTEMMPAAYPPGGGSGGRLPGYRHSAFVPTHSYPEEGLEMHHLERRGGHHRPDTSNLHTDDGYMPMSPGVAPVPSNRKGNGDYMPMSPKSVSAPQQIINPIRRHPQRVDPNGYMMMSPSGSCSPDIGGGSSSSSSISAAPSGSSYGKPWTNGVGGHHTHALPHAKPPVESGGGKLLPCTGDYMNMSPVGDSNTSSPSECYYGPEDPQHKPVLSYYSLPRSFKHTQRPGEPEEGARHQHLRLSSSSGRLRYTATAEDSSSSTSSDSLGGGYCGARPESSLTHPHHHVLQPHLPRKVDTAAQTNSRLARPTRLSLGDPKASTLPRVREQQQQQQSSLHPPEPKSPGEYVNIEFGSGQPGYLAGPATSRSSPSVRCPPQLHPAPREETGSEEYMNMDLGPGRRATWQESGGVELGRIGPAPPGSATVCRPTRSVPNSRGDYMTMQIGCPRQSYVDTSPVAPVSYADMRTGIAAEKASLPRPTGAAPPPSSTASSSASVTPQGATAEQATHSSLLGGPQGPGGMSAFTRVNLSPNHNQSAKVIRADTQGCRRRHSSETFSAPTRAGNTVPFGAGAAVGGSGGGGGGGSEDVKRHSSASFENVWLRPGDLGGVSKESAPVCGAAGGLEKSLNYIDLDLAKEHSQDCPSQQQSLPPPPPHQPLGSNEGNSPRRSSEDLSNYASISFQKQPEDRQ.

At serine 3 the chain carries Phosphoserine. The mediates interaction with PHIP stretch occupies residues 3–133; that stretch reads SPPDTDGFSD…AGGGCGGSCS (131 aa). Positions 12–115 constitute a PH domain; the sequence is DVRKVGYLRK…WYQALLQLHN (104 aa). Serine 99 is subject to Phosphoserine; by CK2. The 105-residue stretch at 155–259 folds into the IRS-type PTB domain; sequence FKEVWQVILK…EAMRAMSDEF (105 aa). Positions 257–425 are disordered; the sequence is DEFRPRSKSQ…SDGGFISSDE (169 aa). Low complexity predominate over residues 264-276; it reads KSQSSSSCSNPIS. A phosphoserine; by RPS6KB1 mark is found at serine 265 and serine 302. Serine 307 is subject to Phosphoserine; by IKKB, MAPK8 and RPS6KB1. 4 positions are modified to phosphoserine: serine 318, serine 325, serine 340, and serine 343. Residues 349–358 show a composition bias toward basic residues; the sequence is THAHRHRGSS. Composition is skewed to low complexity over residues 378-399 and 407-419; these read SPSA…GSTS and SSAS…SDGG. A Phosphoserine modification is found at serine 414. Phosphothreonine occurs at positions 441 and 448. Residue tyrosine 460 is modified to Phosphotyrosine; by INSR. The short motif at 460-463 is the YXXM motif 1 element; the sequence is YICM. At serine 522 the chain carries Phosphoserine; by RPS6KB1. 2 short sequence motifs (YXXM motif) span residues 546 to 549 and 608 to 611; these read YTEM and YMPM. At tyrosine 608 the chain carries Phosphotyrosine; by INSR. Residue serine 612 is modified to Phosphoserine. Residue tyrosine 628 is modified to Phosphotyrosine; by INSR. The YXXM motif 4 signature appears at 628–631; that stretch reads YMPM. Residue serine 632 is modified to Phosphoserine; by RPS6KB1 and ROCK2. The disordered stretch occupies residues 651-720; that stretch reads QRVDPNGYMM…PPVESGGGKL (70 aa). Tyrosine 658 carries the phosphotyrosine modification. A YXXM motif 5 motif is present at residues 658–661; that stretch reads YMMM. Low complexity predominate over residues 662–689; that stretch reads SPSGSCSPDIGGGSSSSSSISAAPSGSS. The short motif at 727-730 is the YXXM motif 6 element; it reads YMNM. The segment at 766-985 is disordered; it reads FKHTQRPGEP…VPNSRGDYMT (220 aa). Residues 771-780 are compositionally biased toward basic and acidic residues; sequence RPGEPEEGAR. Composition is skewed to low complexity over residues 785–794 and 801–810; these read RLSSSSGRLR and DSSSSTSSDS. Residue serine 789 is modified to Phosphoserine; by AMPK and SIK2. Position 887 is a phosphoserine (serine 887). A phosphotyrosine; by INSR mark is found at tyrosine 891, tyrosine 935, and tyrosine 983. Residues 891–893 form a GRB2-binding region; it reads YVN. 3 consecutive short sequence motifs (YXXM motif) follow at residues 935-938, 983-986, and 1006-1009; these read YMNM, YMTM, and YADM. The segment at 1015–1137 is disordered; that stretch reads AEKASLPRPT…GSEDVKRHSS (123 aa). The segment covering 1032 to 1042 has biased composition (low complexity); the sequence is STASSSASVTP. Polar residues-rich tracts occupy residues 1043-1052 and 1069-1081; these read QGATAEQATH and TRVN…NQSA. Phosphoserine is present on residues serine 1096 and serine 1097. Gly residues predominate over residues 1116–1129; it reads AAVGGSGGGGGGGS. Position 1173 is a phosphotyrosine; by INSR (tyrosine 1173). Residues 1178 to 1233 form a disordered region; that stretch reads LAKEHSQDCPSQQQSLPPPPPHQPLGSNEGNSPRRSSEDLSNYASISFQKQPEDRQ. Lysine 1180 is covalently cross-linked (Glycyl lysine isopeptide (Lys-Gly) (interchain with G-Cter in ubiquitin)). Positions 1203–1227 are enriched in polar residues; it reads GSNEGNSPRRSSEDLSNYASISFQK. The residue at position 1220 (tyrosine 1220) is a Phosphotyrosine; by INSR.

Interacts (via phosphorylated YXXM motifs) with PIK3R1. Interacts with ROCK1. Interacts with GRB2. Interacts with SOCS7. Interacts (via IRS-type PTB domain) with IGF1R and INSR (via the tyrosine-phosphorylated NPXY motif). Interacts with UBTF and PIK3CA. Interacts (via PH domain) with PHIP. Interacts with FER. Interacts with ALK. Interacts with EIF2AK2/PKR. Interacts with GKAP1. Interacts with DGKZ in the absence of insulin; insulin stimulation decreases this interaction. Found in a ternary complex with DGKZ and PIP5K1A in the absence of insulin stimulation. Interacts with SQSTM1; the interaction is disrupted by the presence of tensin TNS2. Interacts with NCK1 (via SH2 domain). Interacts with NCK2 (via SH3 domain). Interacts with SH2B1; this interaction enhances leptin-induced activation of the PI3-kinase pathway. Interacts with DVL2; this interaction promotes the Wnt/beta-catenin signaling pathway. In terms of processing, serine phosphorylation of IRS1 is a mechanism for insulin resistance. Ser-307 phosphorylation inhibits insulin action through disruption of IRS1 interaction with the insulin receptor. Phosphorylation of Tyr-891 is required for GRB2-binding. Phosphorylated by ALK. Phosphorylated at Ser-265, Ser-302, Ser-632 and Ser-1097 by RPS6KB1; phosphorylation induces accelerated degradation of IRS1. Phosphorylated on tyrosine residues in response to insulin. In skeletal muscles, dephosphorylated on Tyr-608 by TNS2 under anabolic conditions; dephosphorylation results in the proteasomal degradation of IRS1. Ubiquitinated by the Cul7-RING(FBXW8) complex in a mTOR-dependent manner, leading to its degradation: the Cul7-RING(FBXW8) complex recognizes and binds IRS1 previously phosphorylated by S6 kinase (RPS6KB1 or RPS6KB2). Ubiquitinated by TRAF4 through 'Lys-29' linkage; this ubiquitination regulates the interaction of IRS1 with IGFR and IRS1 tyrosine phosphorylation upon IGF1 stimulation. Post-translationally, S-nitrosylation at by BLVRB inhibits its activity. In terms of tissue distribution, expressed in osteoblasts, but not in osteoclasts.

Its subcellular location is the cytoplasm. The protein localises to the nucleus. Functionally, signaling adapter protein that participates in the signal transduction from two prominent receptor tyrosine kinases, insulin receptor/INSR and insulin-like growth factor I receptor/IGF1R. Plays therefore an important role in development, growth, glucose homeostasis as well as lipid metabolism. Upon phosphorylation by the insulin receptor, functions as a signaling scaffold that propagates insulin action through binding to SH2 domain-containing proteins including the p85 regulatory subunit of PI3K, NCK1, NCK2, GRB2 or SHP2. Recruitment of GRB2 leads to the activation of the guanine nucleotide exchange factor SOS1 which in turn triggers the Ras/Raf/MEK/MAPK signaling cascade. Activation of the PI3K/AKT pathway is responsible for most of insulin metabolic effects in the cell, and the Ras/Raf/MEK/MAPK is involved in the regulation of gene expression and in cooperation with the PI3K pathway regulates cell growth and differentiation. Acts a positive regulator of the Wnt/beta-catenin signaling pathway through suppression of DVL2 autophagy-mediated degradation leading to cell proliferation. This Mus musculus (Mouse) protein is Insulin receptor substrate 1 (Irs1).